Consider the following 349-residue polypeptide: Protein RecA (349 aa).

65–72 (GPESSGKT) is an ATP binding site.

This sequence belongs to the RecA family.

The protein resides in the cytoplasm. Functionally, can catalyze the hydrolysis of ATP in the presence of single-stranded DNA, the ATP-dependent uptake of single-stranded DNA by duplex DNA, and the ATP-dependent hybridization of homologous single-stranded DNAs. It interacts with LexA causing its activation and leading to its autocatalytic cleavage. The chain is Protein RecA from Clostridium acetobutylicum (strain ATCC 824 / DSM 792 / JCM 1419 / IAM 19013 / LMG 5710 / NBRC 13948 / NRRL B-527 / VKM B-1787 / 2291 / W).